The following is a 179-amino-acid chain: Large ribosomal subunit protein uL6 (179 aa).

The protein belongs to the universal ribosomal protein uL6 family. In terms of assembly, part of the 50S ribosomal subunit.

Its function is as follows. This protein binds to the 23S rRNA, and is important in its secondary structure. It is located near the subunit interface in the base of the L7/L12 stalk, and near the tRNA binding site of the peptidyltransferase center. This chain is Large ribosomal subunit protein uL6, found in Finegoldia magna (strain ATCC 29328 / DSM 20472 / WAL 2508) (Peptostreptococcus magnus).